The primary structure comprises 762 residues: Endonuclease MutS2 (762 aa).

The disordered stretch occupies residues 1-22; the sequence is MSDAPKRSLNPTLMMNNNNTPP. Residues 9 to 20 show a composition bias toward low complexity; it reads LNPTLMMNNNNT. 333-340 lines the ATP pocket; sequence GVNAGGKT. Residues 688-762 enclose the Smr domain; sequence LDLRGQRSEE…GGSGVKIVKL (75 aa).

It belongs to the DNA mismatch repair MutS family. MutS2 subfamily. Homodimer. Binds to stalled ribosomes, contacting rRNA.

Its activity is regulated as follows. ATPase activity is stimulated by DNA. Its function is as follows. Endonuclease that is involved in the suppression of homologous recombination and may thus have a key role in the control of bacterial genetic diversity. Also involved in repairing oxidative DNA damage. Has ATPase activity. Binds DNA. In terms of biological role, endonuclease that is involved in the suppression of homologous recombination and thus may have a key role in the control of bacterial genetic diversity. Functionally, acts as a ribosome collision sensor, splitting the ribosome into its 2 subunits. Detects stalled/collided 70S ribosomes which it binds and splits by an ATP-hydrolysis driven conformational change. Acts upstream of the ribosome quality control system (RQC), a ribosome-associated complex that mediates the extraction of incompletely synthesized nascent chains from stalled ribosomes and their subsequent degradation. Probably generates substrates for RQC. The polypeptide is Endonuclease MutS2 (Helicobacter pylori (strain ATCC 700392 / 26695) (Campylobacter pylori)).